A 29-amino-acid polypeptide reads, in one-letter code: Cyclotide mela-7 (29 aa).

Positions 1-29 (GLPTCGETCFKGKCYTPGCSCSYPICKKN) form a cross-link, cyclopeptide (Gly-Asn). 3 cysteine pairs are disulfide-bonded: cysteine 5-cysteine 19, cysteine 9-cysteine 21, and cysteine 14-cysteine 26.

In terms of processing, this is a cyclic peptide. Post-translationally, contains 3 disulfide bonds.

Probably participates in a plant defense mechanism (Potential). Binds to and induces leakage in phospholipd membranes, particularly ones containing 1-palmitoyl-2-oleophosphatidylethanolamine (POPE). In vitro, displays cytotoxicity against cultured cells but no hemolytic activity towards fresh erythrocytes. Not active against Gram-negative bacterium E.coli ATCC 25922 or Gram-positive bacterium S.aureus ATCC 25923 up to a concentration of 64 uM. This chain is Cyclotide mela-7, found in Melicytus latifolius (Norfolk Island mahoe).